The chain runs to 199 residues: MSDFQKSFSESTSSIKFDEKYIDNSVQPNDIGVAEQWAVKTVADPCVGNLATPVNSGYFTKAFINNLPFYREGISPNFRGLETGAAFGYLLYGPFTMTGPLRNSEFALTAGLLAAIGAVHILTALLVLYNAPGKAPNVQPPDATVNNPPKDLFTRAGWADFTSGFWLGGCGGSVFAWLLVGTLHLDTIMPIIKNIWTAG.

A run of 2 helical transmembrane segments spans residues 108–128 (LTAGLLAAIGAVHILTALLVL) and 165–185 (FWLGGCGGSVFAWLLVGTLHL).

The protein belongs to the PsaL family.

It localises to the cellular thylakoid membrane. The sequence is that of Photosystem I reaction center subunit XI from Prochlorococcus marinus (strain AS9601).